The primary structure comprises 564 residues: Dihydroxy-acid dehydratase (564 aa).

Cys-55 contacts [2Fe-2S] cluster. Asp-87 is a binding site for Mg(2+). A [2Fe-2S] cluster-binding site is contributed by Cys-128. Asp-129 and Lys-130 together coordinate Mg(2+). Residue Lys-130 is modified to N6-carboxylysine. [2Fe-2S] cluster is bound at residue Cys-200. Residue Glu-452 coordinates Mg(2+). Residue Ser-478 is the Proton acceptor of the active site.

This sequence belongs to the IlvD/Edd family. Homodimer. Requires [2Fe-2S] cluster as cofactor. Mg(2+) is required as a cofactor.

The enzyme catalyses (2R)-2,3-dihydroxy-3-methylbutanoate = 3-methyl-2-oxobutanoate + H2O. The catalysed reaction is (2R,3R)-2,3-dihydroxy-3-methylpentanoate = (S)-3-methyl-2-oxopentanoate + H2O. Its pathway is amino-acid biosynthesis; L-isoleucine biosynthesis; L-isoleucine from 2-oxobutanoate: step 3/4. It functions in the pathway amino-acid biosynthesis; L-valine biosynthesis; L-valine from pyruvate: step 3/4. Functionally, functions in the biosynthesis of branched-chain amino acids. Catalyzes the dehydration of (2R,3R)-2,3-dihydroxy-3-methylpentanoate (2,3-dihydroxy-3-methylvalerate) into 2-oxo-3-methylpentanoate (2-oxo-3-methylvalerate) and of (2R)-2,3-dihydroxy-3-methylbutanoate (2,3-dihydroxyisovalerate) into 2-oxo-3-methylbutanoate (2-oxoisovalerate), the penultimate precursor to L-isoleucine and L-valine, respectively. In Albidiferax ferrireducens (strain ATCC BAA-621 / DSM 15236 / T118) (Rhodoferax ferrireducens), this protein is Dihydroxy-acid dehydratase.